The chain runs to 607 residues: MIEKLRNIAIIAHVDHGKTTLVDKLLQQSGTFDSRAETQERVMDSNDLEKERGITILAKNTAIKWNDYRINIVDTPGHADFGGEVERVMSMVDSVLLVVDAFDGPMPQTRFVTKKAFAYGLKPIVVINKVDRPGARPDWVVDQVFDLFVNLDATDEQLDFPIVYASALNGIAGLDHEDMAEDMTPLYQAIVDHVPAPDVDLDGPFQMQISQLDYNSYVGVIGIGRIKRGKVKPNQQVTIIDSEGKTRNAKVGKVLGHLGLERIETDLAEAGDIVAITGLGELNISDTVCDTQNVEALPALSVDEPTVSMFFCVNTSPFCGKEGKFVTSRQILDRLNKELVHNVALRVEETEDADAFRVSGRGELHLSVLIENMRREGFELAVSRPKVIFREIDGRKQEPYENVTLDVEEQHQGSVMQALGERKGDLKNMNPDGKGRVRLDYVIPSRGLIGFRSEFMTMTSGTGLLYSTFSHYDDVRPGEVGQRQNGVLISNGQGKAVAFALFGLQDRGKLFLGHGAEVYEGQIIGIHSRSNDLTVNCLTGKKLTNMRASGTDEAVVLVPPIRMTLEQALEFIDDDELVEVTPTSIRIRKRHLTENDRRRANRAPKDD.

The tr-type G domain occupies 3 to 198 (EKLRNIAIIA…AIVDHVPAPD (196 aa)). GTP-binding positions include 15 to 20 (DHGKTT) and 128 to 131 (NKVD).

It belongs to the TRAFAC class translation factor GTPase superfamily. Classic translation factor GTPase family. BipA subfamily. As to quaternary structure, monomer.

Its subcellular location is the cytoplasm. It carries out the reaction GTP + H2O = GDP + phosphate + H(+). Its function is as follows. A 50S ribosomal subunit assembly protein with GTPase activity, required for 50S subunit assembly at low temperatures, may also play a role in translation. Binds GTP and analogs. Binds the 70S ribosome between the 30S and 50S subunits, in a similar position as ribosome-bound EF-G; it contacts a number of ribosomal proteins, both rRNAs and the A-site tRNA. The protein is Large ribosomal subunit assembly factor BipA of Shigella flexneri.